The sequence spans 246 residues: UDP-N-acetyl-D-mannosaminuronic acid transferase (246 aa).

It belongs to the glycosyltransferase 26 family.

It carries out the reaction UDP-N-acetyl-alpha-D-mannosaminouronate + N-acetyl-alpha-D-glucosaminyl-di-trans,octa-cis-undecaprenyl diphosphate = beta-D-ManNAcA-(1-&gt;4)-alpha-D-GlcNAc-di-trans,octa-cis-undecaprenyl diphosphate + UDP + H(+). The protein operates within bacterial outer membrane biogenesis; enterobacterial common antigen biosynthesis. In terms of biological role, catalyzes the synthesis of Und-PP-GlcNAc-ManNAcA (Lipid II), the second lipid-linked intermediate involved in enterobacterial common antigen (ECA) synthesis. This is UDP-N-acetyl-D-mannosaminuronic acid transferase from Yersinia pestis bv. Antiqua (strain Antiqua).